A 28-amino-acid polypeptide reads, in one-letter code: Sarcolamban A (28 aa).

Residues 7 to 27 (LFTTFGILAILLFFLYLIYAV) traverse the membrane as a helical segment.

Interacts with SERCA. Strongly expressed in embryonic and larval somatic muscles and postembryonic heart.

The protein resides in the sarcoplasmic reticulum membrane. Its subcellular location is the cell membrane. The protein localises to the sarcolemma. It localises to the T-tubule. Its function is as follows. Plays an essential role in the regulation of calcium transport at the sarcoplasmic reticulum (SR), which is secondarily required for regular muscle contraction. The chain is Sarcolamban A from Drosophila melanogaster (Fruit fly).